The following is a 285-amino-acid chain: CCR4-NOT transcription complex subunit 7 (285 aa).

Positions 40, 42, 161, 230, and 278 each coordinate a divalent metal cation.

Belongs to the CAF1 family. Component of the CCR4-NOT complex; distinct complexes seem to exist that differ in the participation of probably mutually exclusive catalytic subunits; the complex contains two deadenylase subunits, CNOT6 or CNOT6L, and CNOT7 or CNOT8. In the complex, interacts directly with CNOT1. Interacts with AGO2. Interacts with TOB1; recruited by TOB1 to a ternary complex with CPEB3 which is required for mRNA deadenylation and decay. Interacts with BTG1. Interacts with BTG2. Interacts with NANOS2. Interacts with ZFP36, ZFP36L1 and ZFP36L2; these interactions are inhibited in response to phorbol 12-myristate 13-acetate (PMA) treatment in a p38 MAPK-dependent manner. Interacts with BTG4. Interacts with EIF4E; this interaction is increased by CNOT7 interaction with BTG4. Requires Mn(2+) as cofactor. Mg(2+) serves as cofactor. Co(2+) is required as a cofactor.

The protein resides in the nucleus. It is found in the cytoplasm. It localises to the P-body. The protein localises to the cytoplasmic ribonucleoprotein granule. It catalyses the reaction Exonucleolytic cleavage of poly(A) to 5'-AMP.. In terms of biological role, has 3'-5' poly(A) exoribonuclease activity for synthetic poly(A) RNA substrate. Its function seems to be partially redundant with that of CNOT8. Catalytic component of the CCR4-NOT complex which is one of the major cellular mRNA deadenylases and is linked to various cellular processes including bulk mRNA degradation, miRNA-mediated repression, translational repression during translational initiation and general transcription regulation. During miRNA-mediated repression the complex also seems to act as translational repressor during translational initiation. Additional complex functions may be a consequence of its influence on mRNA expression. Required for miRNA-mediated mRNA deadenylation. Associates with members of the BTG family such as TOB1 and BTG2 and is required for their anti-proliferative activity. This chain is CCR4-NOT transcription complex subunit 7 (CNOT7), found in Bos taurus (Bovine).